Consider the following 329-residue polypeptide: Biotin synthase (329 aa).

Residues 48-278 (FVGDKVFLCS…TKRISICGGR (231 aa)) form the Radical SAM core domain. [4Fe-4S] cluster is bound by residues cysteine 66, cysteine 70, and cysteine 73. Serine 143 and cysteine 203 together coordinate [2Fe-2S] cluster.

Belongs to the radical SAM superfamily. Biotin synthase family. In terms of assembly, homodimer. [4Fe-4S] cluster serves as cofactor. It depends on [2Fe-2S] cluster as a cofactor.

The catalysed reaction is (4R,5S)-dethiobiotin + (sulfur carrier)-SH + 2 reduced [2Fe-2S]-[ferredoxin] + 2 S-adenosyl-L-methionine = (sulfur carrier)-H + biotin + 2 5'-deoxyadenosine + 2 L-methionine + 2 oxidized [2Fe-2S]-[ferredoxin]. It functions in the pathway cofactor biosynthesis; biotin biosynthesis; biotin from 7,8-diaminononanoate: step 2/2. Its function is as follows. Catalyzes the conversion of dethiobiotin (DTB) to biotin by the insertion of a sulfur atom into dethiobiotin via a radical-based mechanism. This is Biotin synthase from Geotalea daltonii (strain DSM 22248 / JCM 15807 / FRC-32) (Geobacter daltonii).